Here is a 442-residue protein sequence, read N- to C-terminus: Proline--tRNA ligase (442 aa).

Belongs to the class-II aminoacyl-tRNA synthetase family. ProS type 2 subfamily. In terms of assembly, homodimer.

Its subcellular location is the cytoplasm. The enzyme catalyses tRNA(Pro) + L-proline + ATP = L-prolyl-tRNA(Pro) + AMP + diphosphate. Catalyzes the attachment of proline to tRNA(Pro) in a two-step reaction: proline is first activated by ATP to form Pro-AMP and then transferred to the acceptor end of tRNA(Pro). The protein is Proline--tRNA ligase of Brucella abortus (strain S19).